Here is a 116-residue protein sequence, read N- to C-terminus: MAGRSGDSDEELLKAVRLIKFLYQSNPPPNPEGTRQARRNRRRRWRERQRQIHSISERILSTYLGRSAEPVPLQLPPLERLTLDCNEDCGTSGTQGVGSPQILVESPTILESGAKE.

2 positions are modified to phosphoserine; by host CK2: Ser5 and Ser8. The segment at 18–26 is homomultimerization; sequence LIKFLYQSN. The interval 23–49 is disordered; sequence YQSNPPPNPEGTRQARRNRRRRWRERQ. A Nuclear localization signal and RNA-binding (RRE) motif is present at residues 34-50; that stretch reads TRQARRNRRRRWRERQR. Positions 36–47 are enriched in basic residues; it reads QARRNRRRRWRE. Residues 73–84 carry the Nuclear export signal and binding to XPO1 motif; it reads LQLPPLERLTLD. Residues Ser92 and Ser99 each carry the phosphoserine; by host modification.

It belongs to the HIV-1 REV protein family. Homomultimer; when bound to the RRE. Multimeric assembly is essential for activity and may involve XPO1. Binds to human KPNB1, XPO1, TNPO1, RANBP5 and IPO7. Interacts with the viral Integrase. Interacts with human KHDRBS1. Interacts with human NAP1; this interaction decreases Rev multimerization and stimulates its activity. Interacts with human DEAD-box helicases DDX3 and DDX24; these interactions may serve for viral RNA export to the cytoplasm and packaging, respectively. Interacts with human PSIP1; this interaction may inhibit HIV-1 DNA integration by promoting dissociation of the Integrase-LEDGF/p75 complex. In terms of processing, asymmetrically arginine dimethylated at one site by host PRMT6. Methylation impairs the RNA-binding activity and export of viral RNA from the nucleus to the cytoplasm. Post-translationally, phosphorylated by protein kinase CK2. Presence of, and maybe binding to the N-terminus of the regulatory beta subunit of CK2 is necessary for CK2-mediated Rev's phosphorylation.

The protein resides in the host nucleus. Its subcellular location is the host nucleolus. It is found in the host cytoplasm. Escorts unspliced or incompletely spliced viral pre-mRNAs (late transcripts) out of the nucleus of infected cells. These pre-mRNAs carry a recognition sequence called Rev responsive element (RRE) located in the env gene, that is not present in fully spliced viral mRNAs (early transcripts). This function is essential since most viral proteins are translated from unspliced or partially spliced pre-mRNAs which cannot exit the nucleus by the pathway used by fully processed cellular mRNAs. Rev itself is translated from a fully spliced mRNA that readily exits the nucleus. Rev's nuclear localization signal (NLS) binds directly to KPNB1/Importin beta-1 without previous binding to KPNA1/Importin alpha-1. KPNB1 binds to the GDP bound form of RAN (Ran-GDP) and targets Rev to the nucleus. In the nucleus, the conversion from Ran-GDP to Ran-GTP dissociates Rev from KPNB1 and allows Rev's binding to the RRE in viral pre-mRNAs. Rev multimerization on the RRE via cooperative assembly exposes its nuclear export signal (NES) to the surface. Rev can then form a complex with XPO1/CRM1 and Ran-GTP, leading to nuclear export of the complex. Conversion from Ran-GTP to Ran-GDP mediates dissociation of the Rev/RRE/XPO1/RAN complex, so that Rev can return to the nucleus for a subsequent round of export. Beside KPNB1, also seems to interact with TNPO1/Transportin-1, RANBP5/IPO5 and IPO7/RANBP7 for nuclear import. The nucleoporin-like HRB/RIP is an essential cofactor that probably indirectly interacts with Rev to release HIV RNAs from the perinuclear region to the cytoplasm. This chain is Protein Rev, found in Human immunodeficiency virus type 1 group M subtype B (isolate PCV12) (HIV-1).